The sequence spans 116 residues: Toxin ICK-10 (116 aa).

An N-terminal signal peptide occupies residues 1-19; sequence MMKLYSLVIIATLAAAAFA. 4 disulfides stabilise this stretch: C56–C71, C64–C77, C68–C113, and C70–C84.

This sequence belongs to the neurotoxin 25 family. ICK-8 subfamily. Expressed by the venom gland.

The protein localises to the secreted. Its function is as follows. Ion channel inhibitor. The protein is Toxin ICK-10 of Trittame loki (Brush-footed trapdoor spider).